The chain runs to 173 residues: Superoxide dismutase [Cu-Zn] 2 (173 aa).

The first 19 residues, 1–19 (MKRLSLAMVTLLACAGAQA), serve as a signal peptide directing secretion. The Cu cation site is built by His67, His69, and His92. The cysteines at positions 74 and 169 are disulfide-linked. His92, His101, His109, and Asp112 together coordinate Zn(2+). His147 lines the Cu cation pocket.

Belongs to the Cu-Zn superoxide dismutase family. As to quaternary structure, monomer. Cu cation is required as a cofactor. Requires Zn(2+) as cofactor.

The protein localises to the periplasm. The catalysed reaction is 2 superoxide + 2 H(+) = H2O2 + O2. Its function is as follows. Destroys radicals which are normally produced within the cells and which are toxic to biological systems. In Salmonella typhimurium (strain LT2 / SGSC1412 / ATCC 700720), this protein is Superoxide dismutase [Cu-Zn] 2 (sodC).